A 182-amino-acid chain; its full sequence is Ribulose bisphosphate carboxylase small subunit, chloroplastic 5 (182 aa).

Residues 1–49 (MASSLMSNAATTMAAATTTAQANMVAPFNGLKSISAFPVTRKNNDITSV) constitute a chloroplast transit peptide.

It belongs to the RuBisCO small chain family. In terms of assembly, heterohexadecamer of 8 large and 8 small subunits.

It is found in the plastid. The protein localises to the chloroplast. Its function is as follows. RuBisCO catalyzes two reactions: the carboxylation of D-ribulose 1,5-bisphosphate, the primary event in carbon dioxide fixation, as well as the oxidative fragmentation of the pentose substrate. Both reactions occur simultaneously and in competition at the same active site. Although the small subunit is not catalytic it is essential for maximal activity. This is Ribulose bisphosphate carboxylase small subunit, chloroplastic 5 from Mesembryanthemum crystallinum (Common ice plant).